The following is an 88-amino-acid chain: Beta-defensin 115 (88 aa).

The N-terminal stretch at 1–27 (MLPDHFSPLSGDIKLSVLALVVLVVLA) is a signal peptide. Intrachain disulfides connect Cys-38–Cys-65, Cys-45–Cys-59, and Cys-49–Cys-66.

Belongs to the beta-defensin family.

The protein localises to the secreted. Has antibacterial activity. This chain is Beta-defensin 115 (DEFB115), found in Homo sapiens (Human).